The chain runs to 891 residues: DNA mismatch repair protein MutS (891 aa).

ATP is bound at residue 639 to 646; the sequence is GPNMAGKS. The disordered stretch occupies residues 827–854; the sequence is TIQEARPSAQGSEEKTPSSPAEKGLSLF.

Belongs to the DNA mismatch repair MutS family.

This protein is involved in the repair of mismatches in DNA. It is possible that it carries out the mismatch recognition step. This protein has a weak ATPase activity. The polypeptide is DNA mismatch repair protein MutS (Treponema denticola (strain ATCC 35405 / DSM 14222 / CIP 103919 / JCM 8153 / KCTC 15104)).